Reading from the N-terminus, the 447-residue chain is NADH peroxidase (447 aa).

Residues 7-11 (GSSHG), E32, C42, 110-113 (SPGA), and R132 contribute to the FAD site. Catalysis depends on H10, which acts as the Proton acceptor. Residue C42 is the Redox-active of the active site. C42 carries the cysteine sulfenic acid (-SOH) modification. The NAD(+) site is built by I160, D179, Y188, and G243. D281 contacts FAD. Residue A297 participates in NAD(+) binding. A299 provides a ligand contact to FAD. Residue G328 coordinates NAD(+).

Belongs to the class-III pyridine nucleotide-disulfide oxidoreductase family. Homotetramer. The cofactor is FAD.

The enzyme catalyses H2O2 + NADH + H(+) = NAD(+) + 2 H2O. In terms of biological role, peroxidase whose active site is a redox-active cysteine-sulfenic acid. This chain is NADH peroxidase (npr), found in Enterococcus faecalis (strain ATCC 700802 / V583).